The following is a 292-amino-acid chain: Transcription factor HFR1 (292 aa).

Residues 114 to 153 (KRRIQVLSSDDESEEFTREVPSVTRKGSKRRRRDEKMSNK) are disordered. A basic motif; degenerate region spans residues 134-147 (PSVTRKGSKRRRRD). A bHLH domain is found at 134–183 (PSVTRKGSKRRRRDEKMSNKMRKLQQLVPNCHKTDKVSVLDKTIEYMKNL). Residues 139 to 153 (KGSKRRRRDEKMSNK) are compositionally biased toward basic residues. Residues 141–148 (SKRRRRDE) carry the Nuclear localization signal motif. The interval 148–183 (EKMSNKMRKLQQLVPNCHKTDKVSVLDKTIEYMKNL) is helix-loop-helix motif.

As to quaternary structure, binds to FHY1 and FHL. Forms PHYA/FHY1/HFR1 complex. Homodimer and heterodimer with PIF3. Do not interact alone with either phytochrome A (phyA) or B (phyB), but REP1/PIF3 complex binds to phyA and phyB, preferentially to the Pfr forms. Forms non-functional heterodimer with PRE6, causing liberation of PIF4 from the transcriptionally inactive complex HFR1-PIF4. Repressed when bound to PRE1, PRE2 and PRE4. Mainly expressed in fruits and flowers and, to a lower extent, in leaves, stems, seedlings and roots.

The protein localises to the nucleus. Its function is as follows. Atypical bHLH transcription factor that regulates photomorphogenesis through modulation of phytochrome (e.g. PHYA) and cryptochrome signalings. Suppresses the transcriptional regulation activity of PIF4 by forming non-DNA-binding heterodimer. This chain is Transcription factor HFR1, found in Arabidopsis thaliana (Mouse-ear cress).